The chain runs to 108 residues: Glutaredoxin-1 (108 aa).

The region spanning 3 to 106 (EEFVQQRLAN…DILSSIGVLR (104 aa)) is the Glutaredoxin domain. C23 and C26 form a disulfide bridge.

The protein belongs to the glutaredoxin family.

The protein resides in the virion. Its function is as follows. Has thioltransferase and dehydroascorbate reductase activities. The chain is Glutaredoxin-1 (OPG075) from Ectromelia virus (strain Moscow) (ECTV).